Reading from the N-terminus, the 440-residue chain is Murein DD-endopeptidase MepM (440 aa).

Residues 21–40 (VMLGSLTVLTLAVAVWRPYV) form a helical membrane-spanning segment. Residues 96–141 (HEYVVSTGDTLSSILNQYGIDMGDITQLAAADKELRNLKIGQQLSW) form the LysM domain. Histidine 314 serves as a coordination point for Zn(2+).

The protein belongs to the peptidase M23B family. It depends on Zn(2+) as a cofactor.

Its subcellular location is the cell membrane. The protein operates within cell wall biogenesis; cell wall polysaccharide biosynthesis. In terms of biological role, a murein DD-endopeptidase with specificity for D-Ala-meso-diaminopimelic acid (mDAP) cross-links. Its role is probably to cleave D-Ala-mDAP cross-links to allow insertion of new glycans and thus cell wall expansion. Functionally redundant with MepM and MepH. The protein is Murein DD-endopeptidase MepM (mepM) of Escherichia coli O6:H1 (strain CFT073 / ATCC 700928 / UPEC).